We begin with the raw amino-acid sequence, 192 residues long: ER protein translocation subcomplex subunit sec67 (192 aa).

In terms of assembly, component of the heterotetrameric Sec62/63complex composed of sec62, sec63, sec66 and sec72. The Sec62/63 complex associates with the Sec61 complex to form the Sec complex.

The protein resides in the cytoplasm. Its subcellular location is the nucleus. In terms of biological role, acts as a non-essential component of the Sec62/63 complex which is involved in SRP-independent post-translational translocation across the endoplasmic reticulum (ER) and functions together with the Sec61 complex and bip1 in a channel-forming translocon complex. A cycle of assembly and disassembly of Sec62/63 complex from sec61 may govern the activity of the translocon. sec72 may be involved in signal peptide recognition for a defined subset of leader peptides, or may increase the efficiency of unusual or 'difficult' secretory precursors to the translocation pore, it may be that this protein binds charged leader peptides to the membrane until they engage the translocation apparatus. The chain is ER protein translocation subcomplex subunit sec67 (sec67) from Schizosaccharomyces pombe (strain 972 / ATCC 24843) (Fission yeast).